Consider the following 312-residue polypeptide: Malate dehydrogenase (312 aa).

NAD(+)-binding positions include 12–17 (GAGFTG) and Asp-36. Arg-87 and Arg-93 together coordinate substrate. NAD(+) is bound by residues Asn-100 and 123–125 (LTN). Residue Asn-125 participates in substrate binding. At Ser-149 the chain carries Phosphoserine. A substrate-binding site is contributed by Arg-156. His-180 acts as the Proton acceptor in catalysis.

The protein belongs to the LDH/MDH superfamily. MDH type 3 family.

It catalyses the reaction (S)-malate + NAD(+) = oxaloacetate + NADH + H(+). Functionally, catalyzes the reversible oxidation of malate to oxaloacetate. The sequence is that of Malate dehydrogenase (mdh) from Bacillus subtilis (strain 168).